We begin with the raw amino-acid sequence, 396 residues long: Elongation factor Tu (396 aa).

The 197-residue stretch at Lys10–Val206 folds into the tr-type G domain. A G1 region spans residues Gly19–Thr26. Gly19–Thr26 contacts GTP. Thr26 provides a ligand contact to Mg(2+). A G2 region spans residues Gly60–Ser64. The tract at residues Asp81–Gly84 is G3. GTP-binding positions include Asp81–His85 and Asn136–Asp139. The segment at Asn136–Asp139 is G4. The tract at residues Ser174–Leu176 is G5.

Belongs to the TRAFAC class translation factor GTPase superfamily. Classic translation factor GTPase family. EF-Tu/EF-1A subfamily. In terms of assembly, monomer.

Its subcellular location is the cytoplasm. The catalysed reaction is GTP + H2O = GDP + phosphate + H(+). Its function is as follows. GTP hydrolase that promotes the GTP-dependent binding of aminoacyl-tRNA to the A-site of ribosomes during protein biosynthesis. In Bdellovibrio bacteriovorus (strain ATCC 15356 / DSM 50701 / NCIMB 9529 / HD100), this protein is Elongation factor Tu.